A 308-amino-acid chain; its full sequence is Polyketide transferase claH (308 aa).

Residues 50–280 (SDIAVYFSQQ…RVEVAAGKSH (231 aa)) form an abhydrolase domain region.

This sequence belongs to the polyketide transferase af380 family.

The protein operates within secondary metabolite biosynthesis. In terms of biological role, polyketide transferase; part of the cla gene cluster that produces clavatol and ortho-quinone methide. The clavatol biosynthesis cluster cla and the terrestric acid cluster tra are both involved in the production of peniphenones and penilactones. The non-reducing PKS claF is responsible for the formation of clavatol from successive condensations of 3 malonyl-CoA units, presumably with a simple acetyl-CoA starter unit, and 2 methylation steps. The esterase claE probably collaborates with claF by catalyzing the hydrolysis of ACP-bound acyl intermediates to free the ACP from stalled intermediates. The clavatol oxidase claD then converts clavatol to hydroxyclavatol. Spontaneous dehydration of hydroxyclavatol leads to the accumulation of the highly active ortho-quinone methide. On the other hand, the PKS-NRPS hybrid traA is involved in the formation of crustosic acid, with the help of traB and traD. The polyketide synthase module (PKS) of traA is responsible for the synthesis of the polyketide backbone via the condensation of an acetyl-CoA starter unit with 3 malonyl-CoA units. The downstream nonribosomal peptide synthetase (NRPS) module then amidates the carboxyl end of the polyketide with L-malic acid. Because traA lacks a designated enoylreductase (ER) domain, the required activity is provided the enoyl reductase traG. Crustosic acid undergoes decarboxylation and isomerization to the terrestric acid, catalyzed by the 2-oxoglutarate-dependent dioxygenase traH. Both acids are further converted to the 2 gamma-butyrolactones (R)-5-methyltetronic acid and (S)-5-carboxylmethyltetronic acid, with involvement of the cytochrome P450 monooxygenase claJ. Spontaneous addition of the methide to these gamma-butyrolactones leads to peniphenone D and penilactone D, which undergo again stereospecific attacking by methide to give penilactones A and B. The function of the polyketide transferase claH has not been investigated yet. This chain is Polyketide transferase claH, found in Penicillium crustosum (Blue mold fungus).